Here is a 344-residue protein sequence, read N- to C-terminus: Protein-arginine kinase (344 aa).

The Phosphagen kinase C-terminal domain maps to 14 to 244; the sequence is IVLSSRIRLA…KQIIQQERLA (231 aa). Residues 17–21, histidine 81, arginine 115, 166–170, and 197–202 each bind ATP; these read SSRIR, RASAM, and RGLYGE.

This sequence belongs to the ATP:guanido phosphotransferase family.

The enzyme catalyses L-arginyl-[protein] + ATP = N(omega)-phospho-L-arginyl-[protein] + ADP + H(+). Catalyzes the specific phosphorylation of arginine residues in proteins. This is Protein-arginine kinase from Clostridium novyi (strain NT).